The sequence spans 89 residues: Small ribosomal subunit protein uS15 (89 aa).

This sequence belongs to the universal ribosomal protein uS15 family. As to quaternary structure, part of the 30S ribosomal subunit. Forms a bridge to the 50S subunit in the 70S ribosome, contacting the 23S rRNA.

In terms of biological role, one of the primary rRNA binding proteins, it binds directly to 16S rRNA where it helps nucleate assembly of the platform of the 30S subunit by binding and bridging several RNA helices of the 16S rRNA. Functionally, forms an intersubunit bridge (bridge B4) with the 23S rRNA of the 50S subunit in the ribosome. The sequence is that of Small ribosomal subunit protein uS15 from Bradyrhizobium sp. (strain ORS 278).